Here is a 153-residue protein sequence, read N- to C-terminus: ORM1-like protein 3 (153 aa).

Residues 1–17 (MNVGTAHSEVNPNTRVM) are important for ceramide level-sensing. The Cytoplasmic portion of the chain corresponds to 1-21 (MNVGTAHSEVNPNTRVMNSRG). 2 consecutive transmembrane segments (helical) span residues 22 to 42 (IWLS…SIPF) and 43 to 63 (VSVP…MYIF). Residues 64–94 (LHTVKGTPFETPDQGKARLLTHWEQMDYGVQ) lie on the Cytoplasmic side of the membrane. Residues 95–117 (FTASRKFLTITPIVLYFLTSFYT) traverse the membrane as a helical segment. The Extracellular portion of the chain corresponds to 118–121 (KYDQ). A helical membrane pass occupies residues 122-142 (IHFILNTVSLMSVLIPKLPQL). A Hydroxyproline modification is found at proline 137. The Cytoplasmic segment spans residues 143-153 (HGVRIFGINKY).

It belongs to the ORM family. In terms of assembly, ceramide-sensitive subunit of the serine palmitoyltransferase (SPT) complex, which is also composed of SPTLC1, SPTLC2/3 and SPTSSA/B. Post-translationally, when hydroxylated at Pro-137, ubiquitinated via 'Lys-48'-linkage, leading to proteasomal degradation. In endothelial cells, ORMDL3 proteasomal degradation is controlled by the sphingosine 1-phosphate receptor signaling pathway.

It localises to the endoplasmic reticulum membrane. In terms of biological role, plays an essential role in the homeostatic regulation of sphingolipid de novo biosynthesis by modulating the activity of the serine palmitoyltransferase (SPT) in response to ceramide levels. When complexed to SPT, the binding of ceramides to its N-terminus stabilizes a conformation that block SPT substrate entry, hence preventing SPT catalytic activity. Through this mechanism, maintains ceramide levels at sufficient concentrations for the production of complex sphingolipids, but which prevents the accumulation of ceramides to levels that trigger apoptosis. This Bos taurus (Bovine) protein is ORM1-like protein 3 (ORMDL3).